A 248-amino-acid polypeptide reads, in one-letter code: MSPSATVFDIGGNAVGTLQLVGHLFDSDPNLHLIHQVVVAQQAAFRQGTHKTKSRAEVSGSGRKPFRQKGTGNARCGSTRAPQMRGGGVVHGPVPRNYVHRTPKKMIKAALAGCLTNRARAGRVHIVDSFGDTPSVADALTLFQITGLSSKLLVVAQASDSVAYRSVRNIPGVRLVHVGQLNSYDVLRSDDVLFTRGAYNVFVGPSGDLAFSEDRDNPGTSLPKSPTPEDSSDATKARSSRHDDRTGA.

Disordered stretches follow at residues 48–96 (GTHK…PVPR) and 210–248 (AFSE…RTGA). A compositionally biased stretch (basic and acidic residues) spans 233–248 (DATKARSSRHDDRTGA).

It belongs to the universal ribosomal protein uL4 family. In terms of assembly, part of the 50S ribosomal subunit.

Functionally, one of the primary rRNA binding proteins, this protein initially binds near the 5'-end of the 23S rRNA. It is important during the early stages of 50S assembly. It makes multiple contacts with different domains of the 23S rRNA in the assembled 50S subunit and ribosome. Forms part of the polypeptide exit tunnel. The polypeptide is Large ribosomal subunit protein uL4 (Tropheryma whipplei (strain Twist) (Whipple's bacillus)).